The sequence spans 117 residues: Large ribosomal subunit protein bL19 (117 aa).

It belongs to the bacterial ribosomal protein bL19 family.

Its function is as follows. This protein is located at the 30S-50S ribosomal subunit interface and may play a role in the structure and function of the aminoacyl-tRNA binding site. The chain is Large ribosomal subunit protein bL19 from Sorangium cellulosum (strain So ce56) (Polyangium cellulosum (strain So ce56)).